Consider the following 548-residue polypeptide: Chaperonin GroEL (548 aa).

ATP is bound by residues 30-33 (TLGP), Lys-51, 87-91 (DGTTT), Gly-415, and Asp-495.

Belongs to the chaperonin (HSP60) family. In terms of assembly, forms a cylinder of 14 subunits composed of two heptameric rings stacked back-to-back. Interacts with the co-chaperonin GroES.

The protein localises to the cytoplasm. The enzyme catalyses ATP + H2O + a folded polypeptide = ADP + phosphate + an unfolded polypeptide.. In terms of biological role, together with its co-chaperonin GroES, plays an essential role in assisting protein folding. The GroEL-GroES system forms a nano-cage that allows encapsulation of the non-native substrate proteins and provides a physical environment optimized to promote and accelerate protein folding. This chain is Chaperonin GroEL, found in Erwinia tasmaniensis (strain DSM 17950 / CFBP 7177 / CIP 109463 / NCPPB 4357 / Et1/99).